Here is a 252-residue protein sequence, read N- to C-terminus: MKTVTVKDLVIGTGAPKIIVSLMAKDIARVKSEALAYREADFDILEWRVDHFADLSNVESVMAAAKILRETMPEKPLLFTFRSAKEGGEQAISTEAYIALNRAAIDSGLVDMIDLELFTGDDQVKETVAYAHAHDVKVVMSNHDFHKTPEAEEIIARLRKMQSFDADIPKIALMPQSTNDVLTLLAATLEMQEQYADRPIITMSMAKTGVISRLAGEVFGSAATFGAVKKASAPGQISVNDLRTVLTILHQA.

3-dehydroquinate contacts are provided by residues Ser21, Glu46 to Arg48, and Arg82. The Proton donor/acceptor role is filled by His143. The active-site Schiff-base intermediate with substrate is Lys170. 3-dehydroquinate-binding residues include Arg213, Ser232, and Gln236.

Belongs to the type-I 3-dehydroquinase family. As to quaternary structure, homodimer.

It catalyses the reaction 3-dehydroquinate = 3-dehydroshikimate + H2O. The protein operates within metabolic intermediate biosynthesis; chorismate biosynthesis; chorismate from D-erythrose 4-phosphate and phosphoenolpyruvate: step 3/7. Its function is as follows. Involved in the third step of the chorismate pathway, which leads to the biosynthesis of aromatic amino acids. Catalyzes the cis-dehydration of 3-dehydroquinate (DHQ) and introduces the first double bond of the aromatic ring to yield 3-dehydroshikimate. In Escherichia coli (strain 55989 / EAEC), this protein is 3-dehydroquinate dehydratase.